A 90-amino-acid chain; its full sequence is Interferon alpha-inducible protein 27-like protein 2A (90 aa).

The signal sequence occupies residues 1–24; the sequence is MLGTLFGSAIGGALAVAGAPVALA. The next 2 helical transmembrane spans lie at 28 to 48 and 67 to 89; these read FTGT…AAAI and GVLG…VGAL.

The protein belongs to the IFI6/IFI27 family. In terms of assembly, homodimer. Interacts with SKP2. Interacts with NR4A1. May interact with BCL2.

Its subcellular location is the nucleus inner membrane. Its function is as follows. May be involved in the interferon-induced negative regulation of the transcriptional activity of NR4A1, NR4A2 and NR4A3 through the enhancement of XPO1-mediated nuclear export of these nuclear receptors. Through the regulation of NR4A1 transcriptional activity, may play a role in the vascular response to injury. The protein is Interferon alpha-inducible protein 27-like protein 2A of Mus musculus (Mouse).